Here is a 128-residue protein sequence, read N- to C-terminus: Large ribosomal subunit protein mL51 (128 aa).

The transit peptide at 1–31 directs the protein to the mitochondrion; that stretch reads MAGSLSWVAGRRLWGLVPLACRSFFLGVPRL.

Belongs to the mitochondrion-specific ribosomal protein mL51 family. Component of the mitochondrial ribosome large subunit (39S) which comprises a 16S rRNA and about 50 distinct proteins. Interacts with OXA1L.

It localises to the mitochondrion. This Bos taurus (Bovine) protein is Large ribosomal subunit protein mL51 (MRPL51).